A 153-amino-acid polypeptide reads, in one-letter code: Small ribosomal subunit protein uS12m (153 aa).

The transit peptide at 1-20 (MLSRFMSNTWCTPLRQAQRL) directs the protein to the mitochondrion.

The protein belongs to the universal ribosomal protein uS12 family. In terms of assembly, component of the mitochondrial small ribosomal subunit (mt-SSU). Mature yeast 74S mitochondrial ribosomes consist of a small (37S) and a large (54S) subunit. The 37S small subunit contains a 15S ribosomal RNA (15S mt-rRNA) and 34 different proteins. The 54S large subunit contains a 21S rRNA (21S mt-rRNA) and 46 different proteins. uS12m forms part of the decoding center of the mt-SSU.

It localises to the mitochondrion. Functionally, component of the mitochondrial ribosome (mitoribosome), a dedicated translation machinery responsible for the synthesis of mitochondrial genome-encoded proteins, including at least some of the essential transmembrane subunits of the mitochondrial respiratory chain. The mitoribosomes are attached to the mitochondrial inner membrane and translation products are cotranslationally integrated into the membrane. uS12m is required for respiratory growth. The protein is Small ribosomal subunit protein uS12m (MRPS12) of Saccharomyces cerevisiae (strain ATCC 204508 / S288c) (Baker's yeast).